The chain runs to 276 residues: Diaminopimelate epimerase (276 aa).

Substrate-binding residues include asparagine 13, glutamine 46, and asparagine 66. The active-site Proton donor is cysteine 75. Substrate-binding positions include 76–77 (GN), asparagine 159, asparagine 192, and 210–211 (ER). Cysteine 219 (proton acceptor) is an active-site residue. 220 to 221 (GT) contacts substrate.

It belongs to the diaminopimelate epimerase family. In terms of assembly, homodimer.

The protein localises to the cytoplasm. The enzyme catalyses (2S,6S)-2,6-diaminopimelate = meso-2,6-diaminopimelate. It participates in amino-acid biosynthesis; L-lysine biosynthesis via DAP pathway; DL-2,6-diaminopimelate from LL-2,6-diaminopimelate: step 1/1. Catalyzes the stereoinversion of LL-2,6-diaminopimelate (L,L-DAP) to meso-diaminopimelate (meso-DAP), a precursor of L-lysine and an essential component of the bacterial peptidoglycan. The sequence is that of Diaminopimelate epimerase from Pseudomonas syringae pv. syringae (strain B728a).